The sequence spans 504 residues: Light-independent protochlorophyllide reductase subunit B (504 aa).

Aspartate 36 contacts [4Fe-4S] cluster. The active-site Proton donor is aspartate 279. 414-415 contacts substrate; that stretch reads GL.

Belongs to the ChlB/BchB/BchZ family. As to quaternary structure, protochlorophyllide reductase is composed of three subunits; BchL, BchN and BchB. Forms a heterotetramer of two BchB and two BchN subunits. It depends on [4Fe-4S] cluster as a cofactor.

It catalyses the reaction chlorophyllide a + oxidized 2[4Fe-4S]-[ferredoxin] + 2 ADP + 2 phosphate = protochlorophyllide a + reduced 2[4Fe-4S]-[ferredoxin] + 2 ATP + 2 H2O. It functions in the pathway porphyrin-containing compound metabolism; bacteriochlorophyll biosynthesis (light-independent). In terms of biological role, component of the dark-operative protochlorophyllide reductase (DPOR) that uses Mg-ATP and reduced ferredoxin to reduce ring D of protochlorophyllide (Pchlide) to form chlorophyllide a (Chlide). This reaction is light-independent. The NB-protein (BchN-BchB) is the catalytic component of the complex. In Acidiphilium rubrum, this protein is Light-independent protochlorophyllide reductase subunit B.